Here is a 511-residue protein sequence, read N- to C-terminus: Exodeoxyribonuclease 7 large subunit (511 aa).

The protein belongs to the XseA family. In terms of assembly, heterooligomer composed of large and small subunits.

The protein resides in the cytoplasm. It carries out the reaction Exonucleolytic cleavage in either 5'- to 3'- or 3'- to 5'-direction to yield nucleoside 5'-phosphates.. In terms of biological role, bidirectionally degrades single-stranded DNA into large acid-insoluble oligonucleotides, which are then degraded further into small acid-soluble oligonucleotides. This is Exodeoxyribonuclease 7 large subunit from Brucella abortus (strain S19).